We begin with the raw amino-acid sequence, 218 residues long: Ribonuclease HII (218 aa).

Residues 13-202 (DLVAGVDEVG…VRAAHEARAT (190 aa)) enclose the RNase H type-2 domain. Residues Asp-19, Glu-20, and Asp-111 each contribute to the a divalent metal cation site.

The protein belongs to the RNase HII family. It depends on Mn(2+) as a cofactor. Mg(2+) is required as a cofactor.

Its subcellular location is the cytoplasm. The enzyme catalyses Endonucleolytic cleavage to 5'-phosphomonoester.. In terms of biological role, endonuclease that specifically degrades the RNA of RNA-DNA hybrids. The polypeptide is Ribonuclease HII (Pseudomonas syringae pv. syringae (strain B728a)).